A 149-amino-acid polypeptide reads, in one-letter code: Calmodulin (149 aa).

Ala-2 bears the N-acetylalanine mark. EF-hand domains lie at 8–43 (DQIS…LGQN), 44–79 (PTEA…KMKD), 81–116 (DSEE…LGEK), and 117–149 (LTDE…MMAK). Ca(2+) is bound by residues Asp-21, Asp-23, Asp-25, Cys-27, Glu-32, Asp-57, Asp-59, Asn-61, Thr-63, Glu-68, Asp-94, Asp-96, Asn-98, and Glu-105. Lys-116 carries the post-translational modification N6,N6,N6-trimethyllysine. Ca(2+) is bound by residues Asp-130, Asp-132, Asp-134, Gln-136, and Glu-141.

This sequence belongs to the calmodulin family.

In terms of biological role, calmodulin mediates the control of a large number of enzymes, ion channels and other proteins by Ca(2+). Among the enzymes to be stimulated by the calmodulin-Ca(2+) complex are a number of protein kinases and phosphatases. The chain is Calmodulin (CCM1) from Capsicum annuum (Capsicum pepper).